Consider the following 351-residue polypeptide: Phospho-N-acetylmuramoyl-pentapeptide-transferase (351 aa).

Transmembrane regions (helical) follow at residues 17–37 (MAYA…HIIL), 62–82 (GIPT…LVFW), 85–105 (ILNV…FLGF), 130–150 (IIFS…HVSI), 163–183 (LGVF…NSFN), 190–210 (GLAI…AYIT), 230–250 (LVIF…FNAY), 254–274 (IMMG…TALI), 281–301 (FSIL…QVIV), and 328–348 (QVVI…LSTI).

It belongs to the glycosyltransferase 4 family. MraY subfamily. Mg(2+) serves as cofactor.

The protein resides in the cell inner membrane. It catalyses the reaction UDP-N-acetyl-alpha-D-muramoyl-L-alanyl-gamma-D-glutamyl-meso-2,6-diaminopimeloyl-D-alanyl-D-alanine + di-trans,octa-cis-undecaprenyl phosphate = di-trans,octa-cis-undecaprenyl diphospho-N-acetyl-alpha-D-muramoyl-L-alanyl-D-glutamyl-meso-2,6-diaminopimeloyl-D-alanyl-D-alanine + UMP. Its pathway is cell wall biogenesis; peptidoglycan biosynthesis. Catalyzes the initial step of the lipid cycle reactions in the biosynthesis of the cell wall peptidoglycan: transfers peptidoglycan precursor phospho-MurNAc-pentapeptide from UDP-MurNAc-pentapeptide onto the lipid carrier undecaprenyl phosphate, yielding undecaprenyl-pyrophosphoryl-MurNAc-pentapeptide, known as lipid I. The chain is Phospho-N-acetylmuramoyl-pentapeptide-transferase from Borreliella afzelii (strain PKo) (Borrelia afzelii).